We begin with the raw amino-acid sequence, 412 residues long: Gamma-glutamyl phosphate reductase (412 aa).

This sequence belongs to the gamma-glutamyl phosphate reductase family.

The protein resides in the cytoplasm. The catalysed reaction is L-glutamate 5-semialdehyde + phosphate + NADP(+) = L-glutamyl 5-phosphate + NADPH + H(+). The protein operates within amino-acid biosynthesis; L-proline biosynthesis; L-glutamate 5-semialdehyde from L-glutamate: step 2/2. In terms of biological role, catalyzes the NADPH-dependent reduction of L-glutamate 5-phosphate into L-glutamate 5-semialdehyde and phosphate. The product spontaneously undergoes cyclization to form 1-pyrroline-5-carboxylate. This Nitratiruptor sp. (strain SB155-2) protein is Gamma-glutamyl phosphate reductase.